Here is a 555-residue protein sequence, read N- to C-terminus: MSTETELQVAVKTSAKKDSRKKGQDRSEATLIKRFKGEGVRYKAKLIGIDEVSAARGDKLCQDSMMKLKGVVAGARSKGEHKQKIFLTISFGGIKIFDEKTGALQHHHAVHEISYIAKDITDHRAFGYVCGKEGNHRFVAIKTAQAAEPVILDLRDLFQLIYELKQREELEKKAQKDKQCEQAVYQTILEEDVEDPVYQYIVFEAGHEPIRDPETEENIYQVPTSQKKEGVYDVPKSQPVSAVTQLELFGDMSTPPDITSPPTPATPGDAFLPAPSQTLPGSADVFGSMSFGTAAVPSGYVAMGAVLPSFWGQQPLVQQQIAMGAQPPVAQVIPGAQPIAWGQPGLFPATQQPWPTVAGQFPPAAFMPTQTVMPLPAAMFQGPLTPLATVPGTNDSARSSPQSDKPRQKMGKEMFKDFQMAQPPPVPSRKPDQPSLTCTSEAFSSYFNKVGVAQDTDDCDDFDISQLNLTPVTSTTPSTNSPPTPAPRQSSPSKSSASHVSDPTADDIFEEGFESPSKSEEQEAPDGSQASSTSDPFGEPSGEPSGDNISPQDGS.

The segment at 1–26 (MSTETELQVAVKTSAKKDSRKKGQDR) is disordered. The segment covering 15 to 26 (AKKDSRKKGQDR) has biased composition (basic and acidic residues). The PID domain occupies 36–189 (KGEGVRYKAK…CEQAVYQTIL (154 aa)). Tyr-198, Tyr-220, and Tyr-232 each carry phosphotyrosine. Disordered stretches follow at residues 386 to 409 (PLAT…PRQK) and 469 to 555 (LTPV…QDGS). Residues 391 to 403 (PGTNDSARSSPQS) show a composition bias toward polar residues. 2 stretches are compositionally biased toward low complexity: residues 470–479 (TPVTSTTPST) and 490–501 (SSPSKSSASHVS). The residue at position 491 (Ser-491) is a Phosphoserine; by CDK5. Residues 504–513 (TADDIFEEGF) show a composition bias toward acidic residues.

Associates with the SH2 domains of SRC, FYN and ABL. Interacts (phosphorylated on tyrosine residues) with CRK and CRKL (via respective SH2 domain). Interacts with SIAH1, LRP8 and VLDLR. Interacts with LRP1. Interacts with APLP1 (via NPXY motif). Interacts with DAB2IP. Interacts with ZSWIM8. In terms of processing, phosphorylated by FYN on Tyr-198 and Tyr-220 upon reelin induction in embryonic neurons. Also phosphorylated on Ser-491 independently of reelin signaling. Ubiquitinated by various cullin-5-RING E3 ubiquitin-protein ligase complexes (ECS complexes) following ligand-binding and phosphorylation, leading to its degradation. Ubiquitinated by the ECS(SOCS7) complex in the cortical plate of the developing cerebral cortex following ligand-binding and phosphorylation by FYN, leading to its degradation by the proteasome. Recognized by ZSWIM8 through a disorder targets misorder mechanism that eliminates misfolded DAB1 via ubiquitination and proteasomal degradation.

The protein localises to the cytoplasm. Its function is as follows. Signaling adapter of the reelin-mediated signaling pathway, which regulates the migration and differentiation of postmitotic neurons during brain development. Mediates intracellular transduction of Reelin signaling following reelin (RELN)-binding to its receptor: acts by docking proteins through its phosphotyrosine residues and PID domain. This chain is Disabled homolog 1 (Dab1), found in Rattus norvegicus (Rat).